We begin with the raw amino-acid sequence, 689 residues long: Protein asunder (689 aa).

A coiled-coil region spans residues 521 to 550 (NGARLKLSKAKDQYRLLYRELEQLIQLNAT). Disordered stretches follow at residues 592-619 (PERLEPISSVGASGSSSSNSLLKASKRR) and 665-689 (GTKDKDTVTTGASITPNVKEESVRS). Over residues 599–614 (SSVGASGSSSSNSLLK) the composition is skewed to low complexity. The Nuclear localization signal (NLS) signature appears at 613–619 (LKASKRR).

The protein belongs to the Integrator subunit 13 family. As to quaternary structure, belongs to the multiprotein complex Integrator, at least composed of IntS1, IntS2, IntS3, IntS4, omd/IntS5, IntS6, defl/IntS7, IntS8, IntS9, IntS10, IntS11, IntS12, asun/IntS13, IntS14 and IntS15. The core complex associates with protein phosphatase 2A subunits mts/PP2A and Pp2A-29B, to form the Integrator-PP2A (INTAC) complex. In terms of processing, phosphorylated. As to expression, expressed in nurse cells at stages 9-10 of oogenesis and exported to the oocyte. Also expressed in the follicle cells surrounding the oocyte.

It is found in the nucleus. The protein resides in the cytoplasm. The protein localises to the perinuclear region. Its function is as follows. Component of the integrator complex, a multiprotein complex that terminates RNA polymerase II (Pol II) transcription in the promoter-proximal region of genes. The integrator complex provides a quality checkpoint during transcription elongation by driving premature transcription termination of transcripts that are unfavorably configured for transcriptional elongation: the complex terminates transcription by (1) catalyzing dephosphorylation of the C-terminal domain (CTD) of Pol II subunit Polr2A/Rbp1 and Spt5, and (2) degrading the exiting nascent RNA transcript via endonuclease activity. The integrator complex is also involved in the 3'-end processing of the U7 snRNA, and also the spliceosomal snRNAs U1, U2, U4 and U5. Plays a role as a regulator of spermatogenesis. Crucial regulator of the mitotic cell cycle and development. Required for the correct dynein-dynactin perinuclear localization important for nucleus-centrosome coupling that occur upon meiotic progression of primary spermatocytes. Plays a role in sperm motility and fertility. May have a role in the PNG/PLU/GNU pathway. This Drosophila melanogaster (Fruit fly) protein is Protein asunder.